The sequence spans 758 residues: 5-methyltetrahydropteroyltriglutamate--homocysteine methyltransferase (758 aa).

Residues R17–K20 and K117 each bind 5-methyltetrahydropteroyltri-L-glutamate. Residues I434–S436 and E487 each bind L-homocysteine. Residues I434–S436 and E487 each bind L-methionine. 5-methyltetrahydropteroyltri-L-glutamate contacts are provided by residues R518–C519 and W564. D602 provides a ligand contact to L-homocysteine. D602 provides a ligand contact to L-methionine. E608 contacts 5-methyltetrahydropteroyltri-L-glutamate. Zn(2+) is bound by residues H644, C646, and E668. Residue H697 is the Proton donor of the active site. A Zn(2+)-binding site is contributed by C729.

The protein belongs to the vitamin-B12 independent methionine synthase family. Zn(2+) is required as a cofactor.

It catalyses the reaction 5-methyltetrahydropteroyltri-L-glutamate + L-homocysteine = tetrahydropteroyltri-L-glutamate + L-methionine. Its pathway is amino-acid biosynthesis; L-methionine biosynthesis via de novo pathway; L-methionine from L-homocysteine (MetE route): step 1/1. In terms of biological role, catalyzes the transfer of a methyl group from 5-methyltetrahydrofolate to homocysteine resulting in methionine formation. This Serratia proteamaculans (strain 568) protein is 5-methyltetrahydropteroyltriglutamate--homocysteine methyltransferase.